Reading from the N-terminus, the 135-residue chain is Small ribosomal subunit protein uS12 (135 aa).

Residues 1–20 (MPTINQLVRKGRHSKVTKSK) form a disordered region. Basic residues predominate over residues 9 to 18 (RKGRHSKVTK).

This sequence belongs to the universal ribosomal protein uS12 family. As to quaternary structure, part of the 30S ribosomal subunit. Contacts proteins S8 and S17. May interact with IF1 in the 30S initiation complex.

Functionally, with S4 and S5 plays an important role in translational accuracy. Interacts with and stabilizes bases of the 16S rRNA that are involved in tRNA selection in the A site and with the mRNA backbone. Located at the interface of the 30S and 50S subunits, it traverses the body of the 30S subunit contacting proteins on the other side and probably holding the rRNA structure together. The combined cluster of proteins S8, S12 and S17 appears to hold together the shoulder and platform of the 30S subunit. The sequence is that of Small ribosomal subunit protein uS12 from Lactobacillus acidophilus (strain ATCC 700396 / NCK56 / N2 / NCFM).